A 557-amino-acid polypeptide reads, in one-letter code: MSTSVFNRRWAALLLEALSRHGVQHICIAPGSRSTPLTLAAAANPSLVCHTHFDERGLGHLALGLAKASTEPVAVIVTSGTAAANLYPALIEAGLTGERLILLTADRPPELIDCGANQAIRQPGMFASHPTVSLNLPRPTPDIPASWLVSTIDSAMAQLHHGGLHVNCPFAEPLYGGDEQCYADWSATLGDWWQDCHPWLRQSRPLPQIEQADWLFWRQKRGVVIAGRMTAEEGEQLAQWAELLGWPLIGDVLSQTGQPLPCADLWLAHPGAQRVLAQAQIVLQFGSSLTGKRLLQWQAQCQPQEYWLVDSIAGRLDPANHRGRRIISPVNEWLEQHPALRRTPWASELIIWSENAHAHVEQALNEQFSEAAVAHRLAELLPENGQLFVGNSLIVRLIDALGQLPAGYPVYSNRGASGIDGLLSTAAGVQRATAKPTLAIVGDLSALYDLNALALLRQSSAPTVLLVVNNNGGQIFSLLPTPEADRQRFYCMPQNVSFEHAAAMFGLGYSRPESGLMLKQQVDQCWLRGGVTLIEIEVPPSQGAETLQQLVQQVAQL.

The protein belongs to the TPP enzyme family. MenD subfamily. In terms of assembly, homodimer. Mg(2+) serves as cofactor. Mn(2+) is required as a cofactor. The cofactor is thiamine diphosphate.

It carries out the reaction isochorismate + 2-oxoglutarate + H(+) = 5-enolpyruvoyl-6-hydroxy-2-succinyl-cyclohex-3-ene-1-carboxylate + CO2. Its pathway is quinol/quinone metabolism; 1,4-dihydroxy-2-naphthoate biosynthesis; 1,4-dihydroxy-2-naphthoate from chorismate: step 2/7. The protein operates within quinol/quinone metabolism; menaquinone biosynthesis. Its function is as follows. Catalyzes the thiamine diphosphate-dependent decarboxylation of 2-oxoglutarate and the subsequent addition of the resulting succinic semialdehyde-thiamine pyrophosphate anion to isochorismate to yield 2-succinyl-5-enolpyruvyl-6-hydroxy-3-cyclohexene-1-carboxylate (SEPHCHC). The protein is 2-succinyl-5-enolpyruvyl-6-hydroxy-3-cyclohexene-1-carboxylate synthase of Yersinia enterocolitica serotype O:8 / biotype 1B (strain NCTC 13174 / 8081).